A 232-amino-acid polypeptide reads, in one-letter code: Large ribosomal subunit protein uL1 (232 aa).

Belongs to the universal ribosomal protein uL1 family. In terms of assembly, part of the 50S ribosomal subunit.

Its function is as follows. Binds directly to 23S rRNA. The L1 stalk is quite mobile in the ribosome, and is involved in E site tRNA release. Protein L1 is also a translational repressor protein, it controls the translation of the L11 operon by binding to its mRNA. The sequence is that of Large ribosomal subunit protein uL1 from Bacillus licheniformis (strain ATCC 14580 / DSM 13 / JCM 2505 / CCUG 7422 / NBRC 12200 / NCIMB 9375 / NCTC 10341 / NRRL NRS-1264 / Gibson 46).